Here is a 426-residue protein sequence, read N- to C-terminus: Ubiquitin carboxyl-terminal hydrolase 46 (426 aa).

Glycine 2 carries N-myristoyl glycine lipidation. The 380-residue stretch at 27-406 folds into the USP domain; the sequence is YGLVNFGNTC…SAYILFYQAR (380 aa). Cysteine 36 serves as the catalytic Nucleophile. The tract at residues 162–181 is disordered; it reads TAGLPRSDEKGTSERNGGIT. The active-site Proton acceptor is the histidine 342.

The protein belongs to the peptidase C19 family. In terms of assembly, interacts with wdr-20 and wdr-48; the catalytic activity of usp-46 is increased in the presence of both wdr-20 and wdr-48. Interacts with glr-1; the interaction results in deubiquitination of glr-1. Expressed in a number of tissues including the nervous system, pharynx, body wall muscle, vulva muscle and intestine and is detected in many head and ventral cord neurons.

The protein localises to the perikaryon. It localises to the cytoplasm. The enzyme catalyses Thiol-dependent hydrolysis of ester, thioester, amide, peptide and isopeptide bonds formed by the C-terminal Gly of ubiquitin (a 76-residue protein attached to proteins as an intracellular targeting signal).. Regulates the abundance of the glr-1 glutamate receptor in the ventral nerve cord by promoting its deubiquitination and preventing its degradation in the lysosome. Contributes to the regulation of embryonic polarity. This Caenorhabditis elegans protein is Ubiquitin carboxyl-terminal hydrolase 46 (usp-46).